The following is a 123-amino-acid chain: Holo-[acyl-carrier-protein] synthase (123 aa).

Mg(2+) contacts are provided by Asp8 and Glu60.

Belongs to the P-Pant transferase superfamily. AcpS family. It depends on Mg(2+) as a cofactor.

The protein localises to the cytoplasm. The enzyme catalyses apo-[ACP] + CoA = holo-[ACP] + adenosine 3',5'-bisphosphate + H(+). Its function is as follows. Transfers the 4'-phosphopantetheine moiety from coenzyme A to a Ser of acyl-carrier-protein. The chain is Holo-[acyl-carrier-protein] synthase from Ehrlichia chaffeensis (strain ATCC CRL-10679 / Arkansas).